The chain runs to 2684 residues: Teneurin-1 (2684 aa).

Disordered stretches follow at residues 1-37 (MFQH…HDYT), 127-156 (TTSS…PTYS), and 170-204 (GTNQ…KKFD). Residues 1–216 (MFQHRTTNAQ…SDTCSRWPSK (216 aa)) lie on the Cytoplasmic side of the membrane. Over residues 11–24 (GPPPNRPMPRPPAG) the composition is skewed to pro residues. The span at 127-136 (TTSSTLSPAS) shows a compositional bias: low complexity. A helical transmembrane segment spans residues 217-237 (WNILLAAALLVALFVICILLF). The Extracellular segment spans residues 238–2684 (RAPNYVYTQP…VHSWKFRKSE (2447 aa)). 2 consecutive EGF-like domains span residues 463–499 (TGRT…KECE) and 501–534 (RHNW…EACE). 6 disulfides stabilise this stretch: Cys-467–Cys-476, Cys-472–Cys-487, Cys-489–Cys-498, Cys-505–Cys-516, Cys-510–Cys-522, and Cys-524–Cys-533. The tract at residues 576–614 (PQAQSPPRRGQEPTESSKTRKAQVKPTPTSEKKKESREL) is disordered. 2 stretches are compositionally biased toward basic and acidic residues: residues 584 to 593 (RGQEPTESSK) and 605 to 614 (SEKKKESREL). EGF-like domains follow at residues 650–684 (DSVD…SNCT) and 716–753 (AIDG…VDCS). Intrachain disulfides connect Cys-654/Cys-666, Cys-659/Cys-672, Cys-674/Cys-683, Cys-720/Cys-730, Cys-724/Cys-741, and Cys-743/Cys-752. NHL repeat units follow at residues 1276-1317 (DSCG…IDTT), 1334-1378 (RTCA…VVHD), 1398-1441 (SASA…VRKL), and 1470-1513 (AVSL…VSAR).

This sequence belongs to the tenascin family. Teneurin subfamily. Post-translationally, probably proteolytically processed to generate a N-terminal intracellular domain. As to expression, isoform 1 is mainly expressed in organs derived from the mesoderm, including the pharynx, vulva muscles, gonad distal tip cells, intestine and several tail neurons. Isoform 2 is mainly expressed in the organs derived from the ectoderm, including hypodermal cells, head ganglion neurons and tail neurons (at protein level).

Its subcellular location is the nucleus. The protein localises to the cell membrane. It localises to the membrane. Its function is as follows. Plays a role in the gonadal basement membrane maintenance and/or adhesion early in development. Contributes to the guidance of pharyngeal neurons. In Caenorhabditis elegans, this protein is Teneurin-1 (ten-1).